An 807-amino-acid chain; its full sequence is Ribosomal RNA large subunit methyltransferase K/L (807 aa).

The THUMP domain maps to 67 to 182 (QIYKICLWSR…EKQAEIFLDL (116 aa)). Over residues 548–560 (NTQYGNPEASAQS) the composition is skewed to polar residues. The segment at 548–602 (NTQYGNPEASAQSKESKNAPEPKKDNRNRYKGNKFQQAREEAKRQEAQRLAQKKR) is disordered. Basic and acidic residues-rich tracts occupy residues 561–575 (KESK…DNRN) and 584–594 (QAREEAKRQEA).

The protein belongs to the methyltransferase superfamily. RlmKL family.

Its subcellular location is the cytoplasm. The catalysed reaction is guanosine(2445) in 23S rRNA + S-adenosyl-L-methionine = N(2)-methylguanosine(2445) in 23S rRNA + S-adenosyl-L-homocysteine + H(+). It carries out the reaction guanosine(2069) in 23S rRNA + S-adenosyl-L-methionine = N(2)-methylguanosine(2069) in 23S rRNA + S-adenosyl-L-homocysteine + H(+). Functionally, specifically methylates the guanine in position 2445 (m2G2445) and the guanine in position 2069 (m7G2069) of 23S rRNA. This Psychrobacter sp. (strain PRwf-1) protein is Ribosomal RNA large subunit methyltransferase K/L.